Consider the following 525-residue polypeptide: GMP synthase [glutamine-hydrolyzing] (525 aa).

Residues 9–207 enclose the Glutamine amidotransferase type-1 domain; it reads RILILDFGSQ…VRDICQCEAL (199 aa). Cys-86 acts as the Nucleophile in catalysis. Residues His-181 and Glu-183 contribute to the active site. A GMPS ATP-PPase domain is found at 208–400; sequence WTPAKIIDDA…LGLPYDMLYR (193 aa). 235-241 lines the ATP pocket; the sequence is SGGVDSS.

As to quaternary structure, homodimer.

It carries out the reaction XMP + L-glutamine + ATP + H2O = GMP + L-glutamate + AMP + diphosphate + 2 H(+). It participates in purine metabolism; GMP biosynthesis; GMP from XMP (L-Gln route): step 1/1. Its function is as follows. Catalyzes the synthesis of GMP from XMP. The polypeptide is GMP synthase [glutamine-hydrolyzing] (Klebsiella pneumoniae subsp. pneumoniae (strain ATCC 700721 / MGH 78578)).